The following is a 448-amino-acid chain: Tryptophan dimethylallyltransferase 1 (448 aa).

Residues 80–81 (IL) and Glu89 contribute to the L-tryptophan site. Substrate contacts are provided by Arg100, Lys186, and Tyr188. Positions 190 and 249 each coordinate L-tryptophan. Substrate is bound by residues Arg262, Lys264, Tyr266, Gln348, Tyr350, Tyr414, and Tyr418.

It belongs to the tryptophan dimethylallyltransferase family. In terms of assembly, homodimer.

It carries out the reaction L-tryptophan + dimethylallyl diphosphate = 4-(3-methylbut-2-enyl)-L-tryptophan + diphosphate. Its pathway is alkaloid biosynthesis; ergot alkaloid biosynthesis. In terms of biological role, tryptophan dimethylallyltransferase; part of the gene cluster that mediates the biosynthesis of fungal ergot alkaloid. DmaW catalyzes the first step of ergot alkaloid biosynthesis by condensing dimethylallyl diphosphate (DMAP) and tryptophan to form 4-dimethylallyl-L-tryptophan. The second step is catalyzed by the methyltransferase easF that methylates 4-dimethylallyl-L-tryptophan in the presence of S-adenosyl-L-methionine, resulting in the formation of 4-dimethylallyl-L-abrine. The catalase easC and the FAD-dependent oxidoreductase easE then transform 4-dimethylallyl-L-abrine to chanoclavine-I which is further oxidized by easD in the presence of NAD(+), resulting in the formation of chanoclavine-I aldehyde. Agroclavine dehydrogenase easG then mediates the conversion of chanoclavine-I aldehyde to agroclavine via a non-enzymatic adduct reaction: the substrate is an iminium intermediate that is formed spontaneously from chanoclavine-I aldehyde in the presence of glutathione. The presence of easA is not required to complete this reaction. Further conversion of agroclavine to paspalic acid is a two-step process involving oxidation of agroclavine to elymoclavine and of elymoclavine to paspalic acid, the second step being performed by the elymoclavine oxidase cloA. Paspalic acid is then further converted to D-lysergic acid. Ergopeptines are assembled from D-lysergic acid and three different amino acids by the D-lysergyl-peptide-synthetases composed each of a monomudular and a trimodular nonribosomal peptide synthetase subunit. LpsB and lpsC encode the monomodular subunits responsible for D-lysergic acid activation and incorporation into the ergopeptine backbone. LpsA1 and A2 subunits encode the trimodular nonribosomal peptide synthetase assembling the tripeptide portion of ergopeptines. LpsA1 is responsible for formation of the major ergopeptine, ergotamine, and lpsA2 for alpha-ergocryptine, the minor ergopeptine of the total alkaloid mixture elaborated by C.purpurea. D-lysergyl-tripeptides are assembled by the nonribosomal peptide synthetases and released as N-(D-lysergyl-aminoacyl)-lactams. Cyclolization of the D-lysergyl-tripeptides is performed by the Fe(2+)/2-ketoglutarate-dependent dioxygenase easH which introduces a hydroxyl group into N-(D-lysergyl-aminoacyl)-lactam at alpha-C of the aminoacyl residue followed by spontaneous condensation with the terminal lactam carbonyl group. The chain is Tryptophan dimethylallyltransferase 1 from Claviceps purpurea (Ergot fungus).